The following is a 185-amino-acid chain: Large ribosomal subunit protein uL18 (185 aa).

This sequence belongs to the universal ribosomal protein uL18 family. Part of the 50S ribosomal subunit. Contacts the 5S and 23S rRNAs.

Functionally, this is one of the proteins that bind and probably mediate the attachment of the 5S RNA into the large ribosomal subunit, where it forms part of the central protuberance. The polypeptide is Large ribosomal subunit protein uL18 (Halorubrum lacusprofundi (strain ATCC 49239 / DSM 5036 / JCM 8891 / ACAM 34)).